Consider the following 512-residue polypeptide: Probable ubiquitin carboxyl-terminal hydrolase 3 (512 aa).

The interval 64 to 109 is disordered; that stretch reads TSKTKESEKSPKSWSAIAKKHVQGDSPVKKSHSVPVPSDRSEKKSF. The region spanning 133-511 is the USP domain; that stretch reads RGFINTGNIC…VAYLLFYTRR (379 aa). C142 serves as the catalytic Nucleophile. H453 (proton acceptor) is an active-site residue.

The protein belongs to the peptidase C19 family.

It catalyses the reaction Thiol-dependent hydrolysis of ester, thioester, amide, peptide and isopeptide bonds formed by the C-terminal Gly of ubiquitin (a 76-residue protein attached to proteins as an intracellular targeting signal).. In Schizosaccharomyces pombe (strain 972 / ATCC 24843) (Fission yeast), this protein is Probable ubiquitin carboxyl-terminal hydrolase 3 (ubp3).